A 115-amino-acid polypeptide reads, in one-letter code: Pro-neuregulin-4, membrane-bound isoform (115 aa).

At 1-62 (MPTDHEQPCG…SSIPSESNLS (62 aa)) the chain is on the extracellular side. In terms of domain architecture, EGF-like spans 5–46 (HEQPCGPRHRSFCLNGGICYVIPTIPSPFCRCIENYTGARCE). 3 cysteine pairs are disulfide-bonded: Cys-9/Cys-23, Cys-17/Cys-34, and Cys-36/Cys-45. Asn-39 and Asn-60 each carry an N-linked (GlcNAc...) asparagine glycan. The chain crosses the membrane as a helical span at residues 63–83 (AAFVVLAVLLTLTIAALCFLC). Topologically, residues 84-115 (RKGHLQRASSVQCEISLVETNNTRTRHSHREH) are cytoplasmic.

The protein belongs to the neuregulin family. In terms of assembly, interacts with ERBB4. Post-translationally, proteolytic cleavage close to the plasma membrane on the external face leads to the release of the soluble growth factor form. Extensive glycosylation precedes the proteolytic cleavage. Highly expressed in pancreas; weakly expressed in muscle.

Its subcellular location is the cell membrane. It localises to the secreted. Its function is as follows. Low affinity ligand for the ERBB4 tyrosine kinase receptor. Concomitantly recruits ERBB1 and ERBB2 coreceptors, resulting in ligand-stimulated tyrosine phosphorylation and activation of the ERBB receptors. Does not bind to the ERBB1, ERBB2 and ERBB3 receptors. The chain is Pro-neuregulin-4, membrane-bound isoform (Nrg4) from Mus musculus (Mouse).